A 194-amino-acid chain; its full sequence is Inosine triphosphate pyrophosphatase (194 aa).

Threonine 10 to lysine 15 contributes to the ITP binding site. Glutamate 41 serves as a coordination point for Mg(2+). Residues lysine 54, aspartate 72–threonine 73, lysine 89, phenylalanine 147–aspartate 150, lysine 172, and glutamine 177–arginine 178 each bind ITP.

The protein belongs to the HAM1 NTPase family. As to quaternary structure, homodimer. It depends on Mg(2+) as a cofactor. Mn(2+) is required as a cofactor.

The protein resides in the cytoplasm. Its subcellular location is the nucleus. The catalysed reaction is ITP + H2O = IMP + diphosphate + H(+). It carries out the reaction dITP + H2O = dIMP + diphosphate + H(+). It catalyses the reaction XTP + H2O = XMP + diphosphate + H(+). Its function is as follows. Pyrophosphatase that hydrolyzes non-canonical purine nucleotides such as inosine triphosphate (ITP), deoxyinosine triphosphate (dITP) or xanthosine 5'-triphosphate (XTP) to their respective monophosphate derivatives. The enzyme does not distinguish between the deoxy- and ribose forms. Probably excludes non-canonical purines from RNA and DNA precursor pools, thus preventing their incorporation into RNA and DNA and avoiding chromosomal lesions. The chain is Inosine triphosphate pyrophosphatase from Kluyveromyces lactis (strain ATCC 8585 / CBS 2359 / DSM 70799 / NBRC 1267 / NRRL Y-1140 / WM37) (Yeast).